Consider the following 306-residue polypeptide: Flavin adenine dinucleotide synthase (306 aa).

FAD contacts are provided by residues serine 59, isoleucine 107, glycine 164, 182–185 (DSNW), arginine 190, and arginine 300.

It belongs to the PAPS reductase family. FAD1 subfamily.

It is found in the cytoplasm. It catalyses the reaction FMN + ATP + H(+) = FAD + diphosphate. It functions in the pathway cofactor biosynthesis; FAD biosynthesis; FAD from FMN: step 1/1. Its function is as follows. Catalyzes the adenylation of flavin mononucleotide (FMN) to form flavin adenine dinucleotide (FAD) coenzyme. The polypeptide is Flavin adenine dinucleotide synthase (Saccharomyces cerevisiae (strain ATCC 204508 / S288c) (Baker's yeast)).